We begin with the raw amino-acid sequence, 37 residues long: Large ribosomal subunit protein bL36 (37 aa).

Belongs to the bacterial ribosomal protein bL36 family.

The polypeptide is Large ribosomal subunit protein bL36 (Bacillus pumilus (strain SAFR-032)).